The sequence spans 363 residues: NAD(P)H-quinone oxidoreductase subunit 1, chloroplastic (363 aa).

The next 6 helical transmembrane spans lie at 28–48 (WVFV…LAIV), 98–118 (FSFG…VIPF), 129–149 (IGVF…LMSG), 253–273 (FGLF…FVTV), 300–320 (VFVT…FIFV), and 336–356 (LLNL…LLTT).

It belongs to the complex I subunit 1 family. As to quaternary structure, NDH is composed of at least 16 different subunits, 5 of which are encoded in the nucleus.

Its subcellular location is the plastid. It is found in the chloroplast thylakoid membrane. It catalyses the reaction a plastoquinone + NADH + (n+1) H(+)(in) = a plastoquinol + NAD(+) + n H(+)(out). It carries out the reaction a plastoquinone + NADPH + (n+1) H(+)(in) = a plastoquinol + NADP(+) + n H(+)(out). Its function is as follows. NDH shuttles electrons from NAD(P)H:plastoquinone, via FMN and iron-sulfur (Fe-S) centers, to quinones in the photosynthetic chain and possibly in a chloroplast respiratory chain. The immediate electron acceptor for the enzyme in this species is believed to be plastoquinone. Couples the redox reaction to proton translocation, and thus conserves the redox energy in a proton gradient. This Phaseolus vulgaris (Kidney bean) protein is NAD(P)H-quinone oxidoreductase subunit 1, chloroplastic.